Here is a 661-residue protein sequence, read N- to C-terminus: Cartilage acidic protein 1 (661 aa).

Residues 1–27 (MAPSADPGMSRMLPFLLLLWFLPITEG) form the signal peptide. An FG-GAP 1; atypical repeat occupies 46-88 (DYDSNPTQLNYGVAVTDVDHDGDFEIVVAGYNGPNLVLKYDRA). An FG-GAP 2; atypical repeat occupies 105 to 147 (YALRDRQGNAIGVTACDIDGDGREEIYFLNTNNAFSGVATYTD). An FG-GAP 3; atypical repeat occupies 283 to 333 (AGVDDPHQHGRGVALADFNRDGKVDIVYGNWNGPHRLYLQMSTHGKVRFRD). The FG-GAP 4; atypical repeat unit spans residues 395 to 437 (GDALEPEGRGTGGVVTDFDGDGMLDLILSHGESMAQPLSVFRG). One can recognise an EGF-like domain in the interval 559–605 (DTNECIQFPFVCPRDKPVCVNTYGSYRCRTNKKCSRGYEPNEDGTAC). 3 disulfide bridges follow: cysteine 563-cysteine 577, cysteine 570-cysteine 586, and cysteine 592-cysteine 605. Residues threonine 608, threonine 618, threonine 619, threonine 621, and threonine 626 are each glycosylated (O-linked (GalNAc...) threonine).

O-glycosylated. In terms of tissue distribution, expressed in the interterritorial matrix of articular deep zone cartilage (at protein level). Isoform 1 and isoform 2 are expressed in brain. Isoform 1 is detected in lung and chondrocytes. Detected in cartilage, bone, cultured chondrocytes and lung, and at low levels in heart. Not detected in osteoblasts.

Its subcellular location is the secreted. It localises to the extracellular space. The protein resides in the extracellular matrix. The chain is Cartilage acidic protein 1 (CRTAC1) from Homo sapiens (Human).